The sequence spans 763 residues: Exo-1,4-beta-xylosidase bxlB (763 aa).

The signal sequence occupies residues 1–23 (MAVFKSWNLALLSSLFIPALCQS). The N-linked (GlcNAc...) asparagine glycan is linked to Asn-63. Asp-288 is an active-site residue. 6 N-linked (GlcNAc...) asparagine glycosylation sites follow: Asn-340, Asn-408, Asn-419, Asn-458, Asn-621, and Asn-760.

This sequence belongs to the glycosyl hydrolase 3 family.

It is found in the secreted. The catalysed reaction is Hydrolysis of (1-&gt;4)-beta-D-xylans, to remove successive D-xylose residues from the non-reducing termini.. It participates in glycan degradation; xylan degradation. Functionally, xylan 1,4-beta-xylosidase involved in the hydrolysis of xylan, a major structural heterogeneous polysaccharide found in plant biomass representing the second most abundant polysaccharide in the biosphere, after cellulose. Active against rye arabinoxylan and xylohexaose, but not paranitrophenyl-beta-xyloside. This chain is Exo-1,4-beta-xylosidase bxlB (bxlB), found in Emericella nidulans (strain FGSC A4 / ATCC 38163 / CBS 112.46 / NRRL 194 / M139) (Aspergillus nidulans).